Consider the following 396-residue polypeptide: Inositol polyphosphate multikinase (396 aa).

Residues 1–13 (MAAEPPALRLRPP) show a composition bias toward low complexity. Positions 1 to 22 (MAAEPPALRLRPPGSTGDSPPV) are disordered. Residue A2 is modified to N-acetylalanine. Residue S19 is modified to Phosphoserine. An ATP-binding site is contributed by K58. Residue R65 participates in substrate binding. ATP contacts are provided by residues 114-116 (EDV) and D127. Substrate is bound by residues K129, 143–150 (KIQQQVSK), and Q179. The short motif at 300 to 310 (RHRKLYAKKHQ) is the Nuclear localization signal element. ATP is bound at residue D365.

The protein belongs to the inositol phosphokinase (IPK) family. The cofactor is Mg(2+). As to expression, highly expressed in kidney, and at lower levels in hippocampus, brain cortex, cerebellum, heart and lung.

Its subcellular location is the nucleus. It carries out the reaction 1D-myo-inositol 1,4,5-trisphosphate + 2 ATP = 1D-myo-inositol 1,3,4,5,6-pentakisphosphate + 2 ADP + 2 H(+). The catalysed reaction is 1D-myo-inositol 1,3,4,6-tetrakisphosphate + ATP = 1D-myo-inositol 1,3,4,5,6-pentakisphosphate + ADP + H(+). The enzyme catalyses 1-octadecanoyl-2-(5Z,8Z,11Z,14Z)-eicosatetraenoyl-sn-glycero-3-phospho-1D-myo-inositol 4,5-bisphosphate + ATP = 1-octadecanoyl-2-(5Z,8Z,11Z,14Z-eicosatetraenoyl)-sn-glycero-3-phospho-(1D-myo-inositol 3,4,5-triphosphate) + ADP + H(+). It catalyses the reaction a 1,2-diacyl-sn-glycero-3-phospho-(1D-myo-inositol-4,5-bisphosphate) + ATP = a 1,2-diacyl-sn-glycero-3-phospho-(1D-myo-inositol-3,4,5-trisphosphate) + ADP + H(+). It carries out the reaction 1D-myo-inositol 1,4,5,6-tetrakisphosphate + ATP = 1D-myo-inositol 1,3,4,5,6-pentakisphosphate + ADP + H(+). The protein operates within phospholipid metabolism; phosphatidylinositol metabolism. Its function is as follows. Inositol phosphate kinase with a broad substrate specificity. Phosphorylates inositol 1,4,5-trisphosphate (Ins(1,4,5)P3) first to inositol 1,3,4,5-tetrakisphosphate and then to inositol 1,3,4,5,6-pentakisphosphate (Ins(1,3,4,5,6)P5). Phosphorylates inositol 1,3,4,6-tetrakisphosphate (Ins(1,3,4,6)P4). Phosphorylates inositol 1,4,5,6-tetrakisphosphate (Ins(1,4,5,6)P4). Phosphorylates glycero-3-phospho-1D-myo-inositol 4,5-bisphosphate to glycero-3-phospho-1D-myo-inositol 3,4,5-trisphosphate. Plays an important role in MLKL-mediated necroptosis via its role in the biosynthesis of inositol pentakisphosphate (InsP5) and inositol hexakisphosphate (InsP6). Binding of these highly phosphorylated inositol phosphates to MLKL mediates the release of an N-terminal auto-inhibitory region, leading to activation of the kinase. Essential for activated phospho-MLKL to oligomerize and localize to the cell membrane during necroptosis. Required for normal embryonic development, probably via its role in the biosynthesis of inositol 1,3,4,5,6-pentakisphosphate (Ins(1,3,4,5,6)P5) and inositol hexakisphosphate (InsP6). The polypeptide is Inositol polyphosphate multikinase (Ipmk) (Rattus norvegicus (Rat)).